The following is a 1357-amino-acid chain: DNA-directed RNA polymerase subunit beta (1357 aa).

It belongs to the RNA polymerase beta chain family. The RNAP catalytic core consists of 2 alpha, 1 beta, 1 beta' and 1 omega subunit. When a sigma factor is associated with the core the holoenzyme is formed, which can initiate transcription.

The enzyme catalyses RNA(n) + a ribonucleoside 5'-triphosphate = RNA(n+1) + diphosphate. Its function is as follows. DNA-dependent RNA polymerase catalyzes the transcription of DNA into RNA using the four ribonucleoside triphosphates as substrates. The protein is DNA-directed RNA polymerase subunit beta of Pseudomonas entomophila (strain L48).